The chain runs to 436 residues: Trigger factor (436 aa).

In terms of domain architecture, PPIase FKBP-type spans D161–P246.

The protein belongs to the FKBP-type PPIase family. Tig subfamily.

The protein localises to the cytoplasm. It catalyses the reaction [protein]-peptidylproline (omega=180) = [protein]-peptidylproline (omega=0). Involved in protein export. Acts as a chaperone by maintaining the newly synthesized protein in an open conformation. Functions as a peptidyl-prolyl cis-trans isomerase. The protein is Trigger factor of Tolumonas auensis (strain DSM 9187 / NBRC 110442 / TA 4).